Here is a 448-residue protein sequence, read N- to C-terminus: Mitochondrial distribution and morphology protein 10 (448 aa).

This sequence belongs to the MDM10 family. As to quaternary structure, component of the ER-mitochondria encounter structure (ERMES) or MDM complex, composed of MMM1, MDM10, MDM12 and MDM34. Associates with the mitochondrial outer membrane sorting assembly machinery SAM(core) complex.

Its subcellular location is the mitochondrion outer membrane. Its function is as follows. Component of the ERMES/MDM complex, which serves as a molecular tether to connect the endoplasmic reticulum and mitochondria. Components of this complex are involved in the control of mitochondrial shape and protein biogenesis and may function in phospholipid exchange. MDM10 is involved in the late assembly steps of the general translocase of the mitochondrial outer membrane (TOM complex). Functions in the TOM40-specific route of the assembly of outer membrane beta-barrel proteins, including the association of TOM40 with the receptor TOM22 and small TOM proteins. Can associate with the SAM(core) complex as well as the MDM12-MMM1 complex, both involved in late steps of the major beta-barrel assembly pathway, that is responsible for biogenesis of all outer membrane beta-barrel proteins. May act as a switch that shuttles between both complexes and channels precursor proteins into the TOM40-specific pathway. Plays a role in mitochondrial morphology and in the inheritance of mitochondria. The polypeptide is Mitochondrial distribution and morphology protein 10 (Podospora anserina (strain S / ATCC MYA-4624 / DSM 980 / FGSC 10383) (Pleurage anserina)).